The sequence spans 516 residues: MRQDENNSEEEFVEIDPTGRYGRYKEVLGKGAFKEVYRAFDQLEGIEVAWNQVKLDDKFCSSEDLDRLYSEVHLLKTLKHKSIIKFYTSWIDHQHMTINLITEVFTSGNLRQYRKKHKCVDLRALKKWSRQILEGLVYLHSHDPPVIHRDLKCDNIFINGNQGEVKIGDLGLAAILHRARSAHSVIGTPEFMAPELYEEDYNVLVDIYAFGMCLLELVTFEYPYSECTNAAQIYRKVTSGIKPAALLNVTDPQVRAFIEKCIAKVSQRLSAKELLDDPFLKCYKENTENVSSHKENGYNGNGIVDKLSDSEVGLLTVEGQRKDLNTIFLKLRITDSKGQIRNIHFPFNIETDTSFSVAIEMVEELDLTDDQDISTIAKMIDTEIHSHIPDWTPSRLIGDDSAVQKCLSSPETLHLDRFPSGRKFWSSPKAGAGDSRSPFAPRSNSKLSSAQGPINQEVGVIVEKLESLLRKQREEIEEMQRDQERIVTEFLKEFPPEICEEALVRLQVKDSDNLLC.

The Protein kinase domain maps to 22 to 280 (GRYKEVLGKG…AKELLDDPFL (259 aa)). ATP-binding positions include 102–105 (TEVF) and Lys152. Catalysis depends on Asp169, which acts as the Proton acceptor. The tract at residues 426-451 (SSPKAGAGDSRSPFAPRSNSKLSSAQ) is disordered. Polar residues predominate over residues 442–451 (RSNSKLSSAQ). Residues 457 to 490 (EVGVIVEKLESLLRKQREEIEEMQRDQERIVTEF) are a coiled coil.

The protein belongs to the protein kinase superfamily. Ser/Thr protein kinase family. WNK subfamily.

It catalyses the reaction L-seryl-[protein] + ATP = O-phospho-L-seryl-[protein] + ADP + H(+). The catalysed reaction is L-threonyl-[protein] + ATP = O-phospho-L-threonyl-[protein] + ADP + H(+). Functionally, may regulate flowering time by modulating the photoperiod pathway. This Arabidopsis thaliana (Mouse-ear cress) protein is Probable serine/threonine-protein kinase WNK3 (WNK3).